Here is a 116-residue protein sequence, read N- to C-terminus: Protein Wnt-5a (116 aa).

Serine 1 carries the O-palmitoleoyl serine; by PORCN lipid modification. N-linked (GlcNAc...) asparagine glycosylation is found at asparagine 69 and asparagine 83. A disulfide bridge connects residues cysteine 82 and cysteine 97.

The protein belongs to the Wnt family. Palmitoleoylation is required for efficient binding to frizzled receptors. Depalmitoleoylation leads to Wnt signaling pathway inhibition.

Its subcellular location is the secreted. The protein localises to the extracellular space. It is found in the extracellular matrix. In terms of biological role, ligand for members of the frizzled family of seven transmembrane receptors. Can activate or inhibit canonical Wnt signaling, depending on receptor context. Required during embryogenesis for extension of the primary anterior-posterior axis. The chain is Protein Wnt-5a (WNT5A) from Anser caerulescens (Snow goose).